We begin with the raw amino-acid sequence, 228 residues long: 7-cyano-7-deazaguanine synthase (228 aa).

An ATP-binding site is contributed by Phe-16–Leu-26. Zn(2+) is bound by residues Cys-195, Cys-203, Cys-206, and Cys-209.

Belongs to the QueC family. Requires Zn(2+) as cofactor.

It carries out the reaction 7-carboxy-7-deazaguanine + NH4(+) + ATP = 7-cyano-7-deazaguanine + ADP + phosphate + H2O + H(+). Its pathway is purine metabolism; 7-cyano-7-deazaguanine biosynthesis. Its function is as follows. Catalyzes the ATP-dependent conversion of 7-carboxy-7-deazaguanine (CDG) to 7-cyano-7-deazaguanine (preQ(0)). This is 7-cyano-7-deazaguanine synthase from Haemophilus influenzae (strain ATCC 51907 / DSM 11121 / KW20 / Rd).